The chain runs to 212 residues: 3-isopropylmalate dehydratase small subunit (212 aa).

Belongs to the LeuD family. LeuD type 1 subfamily. Heterodimer of LeuC and LeuD.

The catalysed reaction is (2R,3S)-3-isopropylmalate = (2S)-2-isopropylmalate. The protein operates within amino-acid biosynthesis; L-leucine biosynthesis; L-leucine from 3-methyl-2-oxobutanoate: step 2/4. Catalyzes the isomerization between 2-isopropylmalate and 3-isopropylmalate, via the formation of 2-isopropylmaleate. The polypeptide is 3-isopropylmalate dehydratase small subunit (Pseudomonas aeruginosa (strain LESB58)).